A 219-amino-acid polypeptide reads, in one-letter code: 7-carboxy-7-deazaguanine synthase (219 aa).

Residues 22–24 (IQG) and Arg-37 each bind substrate. The 192-residue stretch at 28 to 219 (LVGLPSVFIR…PQVHKCFDLK (192 aa)) folds into the Radical SAM core domain. Residues Cys-41, Cys-45, and Cys-48 each contribute to the [4Fe-4S] cluster site. Thr-81 provides a ligand contact to substrate. Residues Gly-83 and 130–132 (SPK) each bind S-adenosyl-L-methionine.

This sequence belongs to the radical SAM superfamily. 7-carboxy-7-deazaguanine synthase family. Homodimer. It depends on [4Fe-4S] cluster as a cofactor. S-adenosyl-L-methionine serves as cofactor. Mg(2+) is required as a cofactor.

It carries out the reaction 6-carboxy-5,6,7,8-tetrahydropterin + H(+) = 7-carboxy-7-deazaguanine + NH4(+). It participates in purine metabolism; 7-cyano-7-deazaguanine biosynthesis. Its function is as follows. Catalyzes the complex heterocyclic radical-mediated conversion of 6-carboxy-5,6,7,8-tetrahydropterin (CPH4) to 7-carboxy-7-deazaguanine (CDG), a step common to the biosynthetic pathways of all 7-deazapurine-containing compounds. The protein is 7-carboxy-7-deazaguanine synthase of Aquifex aeolicus (strain VF5).